The primary structure comprises 93 residues: UPF0358 protein BH2626 (93 aa).

This sequence belongs to the UPF0358 family.

This is UPF0358 protein BH2626 from Halalkalibacterium halodurans (strain ATCC BAA-125 / DSM 18197 / FERM 7344 / JCM 9153 / C-125) (Bacillus halodurans).